The sequence spans 1003 residues: Glutamate receptor ionotropic, NMDA 3B (1003 aa).

The N-terminal stretch at 1-24 (MECVQTLWLSLALALARGSWVVRG) is a signal peptide. Topologically, residues 25 to 574 (HPQPCGVPTR…PIGAFMWPLH (550 aa)) are extracellular. N-linked (GlcNAc...) asparagine glycans are attached at residues N69, N212, N344, N451, and N465. Disulfide bonds link C439-C475 and C445-C476. S531, S533, and R538 together coordinate glycine. S533 and R538 together coordinate D-serine. A helical membrane pass occupies residues 575–594 (WSMWVGVFAALHLTALFLTL). Residues 595 to 615 (YEWRSPYGLTPRGRNRGTVFS) lie on the Cytoplasmic side of the membrane. Positions 616–627 (YSSALNLCYAIL) form an intramembrane region, discontinuously helical. Residues 628-641 (FGRTVSSKTPKCPT) lie on the Cytoplasmic side of the membrane. A helical transmembrane segment spans residues 642 to 661 (GRFLMNLWAIFCLLVLSSYT). Residues 662-832 (ANLAAVMVGD…TLQMGVYHLS (171 aa)) lie on the Extracellular side of the membrane. A glycine-binding site is contributed by S701. S701, A702, and D745 together coordinate D-serine. Residue D745 coordinates glycine. N786 carries an N-linked (GlcNAc...) asparagine glycan. The helical transmembrane segment at 833–848 (GLFVLLCLGLGSALLT) threads the bilayer. At 849-1003 (SLGEHVFYRL…RLLHAAPAES (155 aa)) the chain is on the cytoplasmic side. The interval 883 to 912 (LNTGPPEGQQERAEQECSGPKEEQPAADGA) is disordered. Over residues 891-906 (QQERAEQECSGPKEEQ) the composition is skewed to basic and acidic residues. The stretch at 947–986 (SNGPGVQAELRELELRIEAARERLRSALLRRGELRAQLGD) forms a coiled coil. Positions 952–985 (VQAELRELELRIEAARERLRSALLRRGELRAQLG) are involved in the trafficking and surface expression of NMDARs.

Belongs to the glutamate-gated ion channel (TC 1.A.10.1) family. NR3B/GRIN3B subfamily. Forms heterotetrameric channels that contain at least two GluN1 subunits and at least a combination of one GluN2 and one GluN3 subunits (in vitro). Forms heterotetrameric channels composed of two GluN1/zeta subunits (GRIN1), and two identical GluN3 subunits (GRIN3A or GRIN3B) (in vitro). Does not form functional homomeric channels. Expressed in the facial nucleus and the ambiguus nucleus of the brainstem, pons, medulla, spinal cord and cerebellum.

The protein resides in the cell membrane. It is found in the postsynaptic cell membrane. The catalysed reaction is Ca(2+)(in) = Ca(2+)(out). It catalyses the reaction Na(+)(in) = Na(+)(out). Its function is as follows. Component of a non-conventional N-methyl-D-aspartate (NMDA) receptors (NMDARs) that function as heterotetrameric, ligand-gated cation channels with low calcium permeability and low voltage-dependent block by Mg(2+). Forms glutamatergic receptor complexes with GluN1 and GluN2 subunits which are activated by glycine binding to the GluN1 and GluN3 subunits and L-glutamate binding to GluN2 subunits. Forms excitatory glycinergic receptor complexes with GluN1 alone which are activated by glycine binding to the GluN1 and GluN3 subunits. GluN3B subunit also binds D-serine and, in the absence of glycine, activates glycinergic receptor complexes, but with lower efficacy than glycine. Each GluN3 subunit confers differential attributes to channel properties, including activation, deactivation and desensitization kinetics, pH sensitivity, Ca2(+) permeability, and binding to allosteric modulators. This Mus musculus (Mouse) protein is Glutamate receptor ionotropic, NMDA 3B.